Here is a 417-residue protein sequence, read N- to C-terminus: Tol-Pal system protein TolB (417 aa).

The first 16 residues, 1 to 16, serve as a signal peptide directing secretion; that stretch reads MRYLWLFLIGTIGLFA.

Belongs to the TolB family. The Tol-Pal system is composed of five core proteins: the inner membrane proteins TolA, TolQ and TolR, the periplasmic protein TolB and the outer membrane protein Pal. They form a network linking the inner and outer membranes and the peptidoglycan layer.

Its subcellular location is the periplasm. Functionally, part of the Tol-Pal system, which plays a role in outer membrane invagination during cell division and is important for maintaining outer membrane integrity. This is Tol-Pal system protein TolB from Helicobacter pylori (strain HPAG1).